The primary structure comprises 433 residues: Serine/threonine-protein phosphatase 2A activator 2 (433 aa).

Residues 1–10 (MTSQAPPQPA) are compositionally biased toward pro residues. 2 disordered regions span residues 1-67 (MTSQ…NWTF) and 367-400 (SMSE…GTGW). Low complexity predominate over residues 11-23 (SSPGVAAPAAASS). The segment covering 45–59 (NPTPIPETPALPTPP) has biased composition (pro residues). Residues 367 to 382 (SMSEDTGAGDEADVED) show a composition bias toward acidic residues. Over residues 383-396 (DPHAGHDHTGKAHD) the composition is skewed to basic and acidic residues.

The protein belongs to the PTPA-type PPIase family.

The protein resides in the cytoplasm. The catalysed reaction is [protein]-peptidylproline (omega=180) = [protein]-peptidylproline (omega=0). Its function is as follows. PPIases accelerate the folding of proteins. It catalyzes the cis-trans isomerization of proline imidic peptide bonds in oligopeptides. Acts as a regulatory subunit for PP2A-like phosphatases modulating their activity or substrate specificity, probably by inducing a conformational change in the catalytic subunit, a direct target of the PPIase. Can reactivate inactive phosphatase PP2A-phosphatase methylesterase complexes (PP2Ai) in presence of ATP and Mg(2+) by dissociating the inactive form from the complex. The polypeptide is Serine/threonine-protein phosphatase 2A activator 2 (RRD2) (Gibberella zeae (strain ATCC MYA-4620 / CBS 123657 / FGSC 9075 / NRRL 31084 / PH-1) (Wheat head blight fungus)).